Here is a 133-residue protein sequence, read N- to C-terminus: uncharacterized protein (133 aa).

It belongs to the mimivirus L15/L51/R83 family.

This is an uncharacterized protein from Acanthamoeba polyphaga (Amoeba).